Here is a 390-residue protein sequence, read N- to C-terminus: Sulfate adenylyltransferase (390 aa).

The protein belongs to the sulfate adenylyltransferase family.

It catalyses the reaction sulfate + ATP + H(+) = adenosine 5'-phosphosulfate + diphosphate. It participates in sulfur metabolism; hydrogen sulfide biosynthesis; sulfite from sulfate: step 1/3. The sequence is that of Sulfate adenylyltransferase (sat) from Synechocystis sp. (strain ATCC 27184 / PCC 6803 / Kazusa).